The following is a 282-amino-acid chain: uncharacterized protein (282 aa).

It to M.tuberculosis Rv2161c and Rv3079c.

This is an uncharacterized protein from Mycobacterium tuberculosis (strain CDC 1551 / Oshkosh).